A 426-amino-acid polypeptide reads, in one-letter code: Serine--tRNA ligase (426 aa).

The disordered stretch occupies residues 36 to 66 (KRKHLQERTQDLQSQRNTISKEIGQKKAKGE). The segment covering 46 to 55 (DLQSQRNTIS) has biased composition (polar residues). 233 to 235 (TAE) lines the L-serine pocket. Position 264 to 266 (264 to 266 (RSE)) interacts with ATP. Glu287 serves as a coordination point for L-serine. Position 351-354 (351-354 (EISS)) interacts with ATP. Ser387 lines the L-serine pocket.

Belongs to the class-II aminoacyl-tRNA synthetase family. Type-1 seryl-tRNA synthetase subfamily. Homodimer. The tRNA molecule binds across the dimer.

It localises to the cytoplasm. It catalyses the reaction tRNA(Ser) + L-serine + ATP = L-seryl-tRNA(Ser) + AMP + diphosphate + H(+). It carries out the reaction tRNA(Sec) + L-serine + ATP = L-seryl-tRNA(Sec) + AMP + diphosphate + H(+). It functions in the pathway aminoacyl-tRNA biosynthesis; selenocysteinyl-tRNA(Sec) biosynthesis; L-seryl-tRNA(Sec) from L-serine and tRNA(Sec): step 1/1. Functionally, catalyzes the attachment of serine to tRNA(Ser). Is also able to aminoacylate tRNA(Sec) with serine, to form the misacylated tRNA L-seryl-tRNA(Sec), which will be further converted into selenocysteinyl-tRNA(Sec). This chain is Serine--tRNA ligase, found in Francisella tularensis subsp. tularensis (strain FSC 198).